Consider the following 193-residue polypeptide: Chaperone protein TorD (193 aa).

This sequence belongs to the TorD/DmsD family. TorD subfamily.

It localises to the cytoplasm. Involved in the biogenesis of TorA. Acts on TorA before the insertion of the molybdenum cofactor and, as a result, probably favors a conformation of the apoenzyme that is competent for acquiring the cofactor. The protein is Chaperone protein TorD of Histophilus somni (strain 129Pt) (Haemophilus somnus).